We begin with the raw amino-acid sequence, 375 residues long: Probable sugar phosphate/phosphate translocator At3g17430 (375 aa).

10 consecutive transmembrane segments (helical) span residues 9–29 (LVLT…VILY), 43–63 (LPIT…FLLI), 76–96 (FEIY…SLWF), 106–126 (VAFI…MAVV), 140–160 (MLLV…FNIV), 163–183 (VYQV…QVLL), 193–213 (ITSL…PWYV), 229–249 (WIFF…FLVI), 257–276 (IRVA…TVIF), and 280–302 (TITG…YNYI). A disordered region spans residues 328-348 (EKKSSDKFNPNDSVEIPRVGG).

The protein belongs to the TPT transporter family. TPT (TC 2.A.7.9) subfamily.

It is found in the membrane. The sequence is that of Probable sugar phosphate/phosphate translocator At3g17430 from Arabidopsis thaliana (Mouse-ear cress).